We begin with the raw amino-acid sequence, 621 residues long: MSTYGYTHYTSTSQGRGLASGAYTSGFGGLVSGMSSAGAICTTQIRDAREREKREIGLLNDRLADYIEKVRFLEAQNQCLSHDIDILRRGFSGGGHVSGLYDTEIAQAKRILEQTIAGHAAFDRDIAALGSDIDAIRKKWIDAVNAVKAHREDHDVDLDRLAKVEAEISLFKRKIRIVEEDVIRIRRENDGIYNEIARIKQLTHNEIALKNERSLNVQDLLQRIKLLQTENSTRIEQELVFIRRDTTAENRDYFRHELQAAIRDIRADYEAISIRNRNDIEVWYREQIRKIQTESKPVNQDLYKEELASIRTTVTNVKSRLAEVEGRNFFLEKLIEDLRNNEESKLYEISLAEKDAQIARLREQCTELSIQMERLCDNEISLRAEIERYRVLLNGANVTTYVSNTHPSGVSVGGIVGTTRVISQTTRTNSSSNTSYSGVPASRTGYSVGGNIGGISVGGTIGGVSVGGNVGAHGASGHVSGGAAGSVSSLVSEKRPDRVHDEKGVDASGRSFHSWYLGTISINQITPSYIELKNICKIRRVDVGGFRVEQYINGELLGSAQINVPLILDPQEVVRIHHRHGKYLGQFFMDVDAFDNSTASRTSMYNYTEPNEERAWFVYLN.

The tract at residues 20–55 (SGAYTSGFGGLVSGMSSAGAICTTQIRDAREREKRE) is head. The IF rod domain maps to 52 to 400 (EKREIGLLND…VLLNGANVTT (349 aa)). Residues 56 to 87 (IGLLNDRLADYIEKVRFLEAQNQCLSHDIDIL) form a coil 1A region. Residues 88 to 100 (RRGFSGGGHVSGL) are linker 1. The coil 1B stretch occupies residues 101–238 (YDTEIAQAKR…TENSTRIEQE (138 aa)). The linker 12 stretch occupies residues 239 to 256 (LVFIRRDTTAENRDYFRH). The interval 257–400 (ELQAAIRDIR…VLLNGANVTT (144 aa)) is coil 2. A tail region spans residues 401–549 (YVSNTHPSGV…RVDVGGFRVE (149 aa)). Residues 508–621 (SGRSFHSWYL…EERAWFVYLN (114 aa)) enclose the LTD domain.

The protein belongs to the intermediate filament family.

The protein localises to the cytoplasm. Cytoplasmic intermediate filaments provide mechanical strength to cells. This chain is Intermediate filament protein ifc-2, found in Caenorhabditis briggsae.